A 133-amino-acid polypeptide reads, in one-letter code: UPF0102 protein Fnod_1509 (133 aa).

Belongs to the UPF0102 family.

This is UPF0102 protein Fnod_1509 from Fervidobacterium nodosum (strain ATCC 35602 / DSM 5306 / Rt17-B1).